The chain runs to 199 residues: Small ribosomal subunit protein eS6 (199 aa).

Over residues 172 to 183 the composition is skewed to basic and acidic residues; it reads KEQREKRSESLA. Residues 172–199 form a disordered region; it reads KEQREKRSESLAKKRSRLSAASKPSIAA.

The protein belongs to the eukaryotic ribosomal protein eS6 family. Ribosomal protein S6 is the major substrate of protein kinases in eukaryote ribosomes.

Functionally, component of the 40S small ribosomal subunit. Plays an important role in controlling cell growth and proliferation through the selective translation of particular classes of mRNA. The protein is Small ribosomal subunit protein eS6 (RPS6) of Nicotiana tabacum (Common tobacco).